The sequence spans 690 residues: eEF1A lysine and N-terminal methyltransferase (690 aa).

The disordered stretch occupies residues 427 to 451 (AAASSASKKKNKKKAKQPASTGAKD). Residues 433–442 (SKKKNKKKAK) show a composition bias toward basic residues.

The protein belongs to the methyltransferase superfamily.

It carries out the reaction L-lysyl-[protein] + S-adenosyl-L-methionine = N(6)-methyl-L-lysyl-[protein] + S-adenosyl-L-homocysteine + H(+). It catalyses the reaction N(6)-methyl-L-lysyl-[protein] + S-adenosyl-L-methionine = N(6),N(6)-dimethyl-L-lysyl-[protein] + S-adenosyl-L-homocysteine + H(+). The catalysed reaction is N-terminal glycyl-L-lysyl-L-glutamyl-[protein] + 3 S-adenosyl-L-methionine = N-terminal N,N,N-trimethyl-glycyl-L-lysyl-L-glutamyl-[protein] + 3 S-adenosyl-L-homocysteine + 3 H(+). In terms of biological role, dual methyltransferase that catalyzes methylation of elongation factor 1-alpha (eef1a1 and eef1a2) at two different positions, and is therefore involved in the regulation of mRNA translation. Via its C-terminus, methylates the N-terminus of eef1a1 and eef1a2. Via its N-terminus dimethylates lysine residues of eef1a1 and eef1a2. This Danio rerio (Zebrafish) protein is eEF1A lysine and N-terminal methyltransferase (mettl13).